The chain runs to 70 residues: Small, acid-soluble spore protein I (70 aa).

Belongs to the SspI family.

The protein localises to the spore core. The chain is Small, acid-soluble spore protein I from Bacillus cytotoxicus (strain DSM 22905 / CIP 110041 / 391-98 / NVH 391-98).